Consider the following 351-residue polypeptide: Phosphoribosylformylglycinamidine cyclo-ligase (351 aa).

It belongs to the AIR synthase family.

It localises to the cytoplasm. The enzyme catalyses 2-formamido-N(1)-(5-O-phospho-beta-D-ribosyl)acetamidine + ATP = 5-amino-1-(5-phospho-beta-D-ribosyl)imidazole + ADP + phosphate + H(+). Its pathway is purine metabolism; IMP biosynthesis via de novo pathway; 5-amino-1-(5-phospho-D-ribosyl)imidazole from N(2)-formyl-N(1)-(5-phospho-D-ribosyl)glycinamide: step 2/2. In Idiomarina loihiensis (strain ATCC BAA-735 / DSM 15497 / L2-TR), this protein is Phosphoribosylformylglycinamidine cyclo-ligase.